We begin with the raw amino-acid sequence, 178 residues long: Large ribosomal subunit protein uL6 (178 aa).

This sequence belongs to the universal ribosomal protein uL6 family. In terms of assembly, part of the 50S ribosomal subunit.

This protein binds to the 23S rRNA, and is important in its secondary structure. It is located near the subunit interface in the base of the L7/L12 stalk, and near the tRNA binding site of the peptidyltransferase center. This is Large ribosomal subunit protein uL6 from Levilactobacillus brevis (strain ATCC 367 / BCRC 12310 / CIP 105137 / JCM 1170 / LMG 11437 / NCIMB 947 / NCTC 947) (Lactobacillus brevis).